Consider the following 438-residue polypeptide: uncharacterized protein (438 aa).

12 helical membrane passes run valine 22–glycine 42, serine 59–phenylalanine 79, isoleucine 89–alanine 109, methionine 137–glycine 157, phenylalanine 174–phenylalanine 194, leucine 237–lysine 257, histidine 258–valine 278, alanine 292–threonine 312, methionine 330–serine 350, phenylalanine 356–isoleucine 376, serine 380–valine 400, and alanine 418–leucine 438.

The protein belongs to the CitM (TC 2.A.11) transporter family.

The protein resides in the cell membrane. Transports the free citrate anion. This is an uncharacterized protein from Bacillus subtilis (strain 168).